The following is a 209-amino-acid chain: Putative NAD(P)H nitroreductase YdgI (209 aa).

Residues 14-16 (RRS), 72-74 (QTQ), 161-162 (GG), and Arg-199 each bind FMN.

The protein belongs to the nitroreductase family. The cofactor is FMN.

In Bacillus subtilis (strain 168), this protein is Putative NAD(P)H nitroreductase YdgI (ydgI).